We begin with the raw amino-acid sequence, 1124 residues long: Phytochrome type A (1124 aa).

Over residues 1-19 (MSTTRPSQSSNNSGRSRNS) the composition is skewed to low complexity. A disordered region spans residues 1–21 (MSTTRPSQSSNNSGRSRNSAR). The 184-residue stretch at 218–401 (SMERLCDTMV…VFAIHVNKEI (184 aa)) folds into the GAF domain. Cys323 provides a ligand contact to phytochromobilin. 2 consecutive PAS domains span residues 617–687 (VTSE…LQGE) and 750–821 (DYKA…VNFG). Residues 901-1120 (YMKRQIRNPL…ILSVELAAAH (220 aa)) form the Histidine kinase domain.

This sequence belongs to the phytochrome family. In terms of assembly, homodimer. Post-translationally, contains one covalently linked phytochromobilin chromophore.

In terms of biological role, regulatory photoreceptor which exists in two forms that are reversibly interconvertible by light: the Pr form that absorbs maximally in the red region of the spectrum and the Pfr form that absorbs maximally in the far-red region. Photoconversion of Pr to Pfr induces an array of morphogenic responses, whereas reconversion of Pfr to Pr cancels the induction of those responses. Pfr controls the expression of a number of nuclear genes including those encoding the small subunit of ribulose-bisphosphate carboxylase, chlorophyll A/B binding protein, protochlorophyllide reductase, rRNA, etc. It also controls the expression of its own gene(s) in a negative feedback fashion. This chain is Phytochrome type A (PHYA), found in Lathyrus sativus (White vetchling).